We begin with the raw amino-acid sequence, 316 residues long: Methionyl-tRNA formyltransferase (316 aa).

110 to 113 provides a ligand contact to (6S)-5,6,7,8-tetrahydrofolate; that stretch reads SLLP.

The protein belongs to the Fmt family.

The catalysed reaction is L-methionyl-tRNA(fMet) + (6R)-10-formyltetrahydrofolate = N-formyl-L-methionyl-tRNA(fMet) + (6S)-5,6,7,8-tetrahydrofolate + H(+). Attaches a formyl group to the free amino group of methionyl-tRNA(fMet). The formyl group appears to play a dual role in the initiator identity of N-formylmethionyl-tRNA by promoting its recognition by IF2 and preventing the misappropriation of this tRNA by the elongation apparatus. The protein is Methionyl-tRNA formyltransferase of Halothermothrix orenii (strain H 168 / OCM 544 / DSM 9562).